Here is a 248-residue protein sequence, read N- to C-terminus: PF03932 family protein CutC (248 aa).

Belongs to the CutC family. As to quaternary structure, homodimer.

The protein resides in the cytoplasm. The polypeptide is PF03932 family protein CutC (Escherichia coli O9:H4 (strain HS)).